The chain runs to 404 residues: XK-related protein 8 (404 aa).

8 consecutive transmembrane segments (helical) span residues 14-34 (FVFSVIGVFTFFVDWGADVWV), 44-64 (FFWFGVLVGLMVLSSVLVQMF), 167-187 (AVQFVSVAASTTSIAWMVVDY), 206-226 (SLIYFLWNLLLIAPRVAALAL), 227-247 (FASVVGGYLGLHLLLLWLVFV), 263-283 (GEWLYRATVGIIWYFSWFNVA), 292-312 (AIYHAFITADGAILLVTWWCC), and 319-339 (EPYALALLLTLLLSYLLGLLF).

Belongs to the XK family.

It is found in the cell membrane. It catalyses the reaction a 1,2-diacyl-sn-glycero-3-phospho-L-serine(in) = a 1,2-diacyl-sn-glycero-3-phospho-L-serine(out). Its function is as follows. Phospholipid scramblase that promotes phosphatidylserine exposure on apoptotic cell surface, possibly by mediating phospholipid scrambling. Phosphatidylserine is a specific marker only present at the surface of apoptotic cells and acts as a specific signal for engulfment. The chain is XK-related protein 8 from Tetraodon nigroviridis (Spotted green pufferfish).